Reading from the N-terminus, the 749-residue chain is RNA-binding protein 5-B (749 aa).

The interval 1-88 (MGSDKRVSRS…YHSDGDYMDH (88 aa)) is disordered. Residues 102-182 (KTIMLRGLPI…KTIAMHYSNP (81 aa)) form the RRM 1 domain. A RanBP2-type zinc finger spans residues 185-214 (KFEDWLCNKCGLYNFRRRLKCFRCGAAKAE). In terms of domain architecture, RRM 2 spans 241–325 (SAIILRNIGP…KTIGVDFAKS (85 aa)). Disordered regions lie at residues 425-471 (QMYQ…SVPD), 520-558 (PAAD…AQQI), 570-595 (NKQK…ESAA), and 626-680 (TEEE…NSNI). A compositionally biased stretch (low complexity) spans 429–460 (QPGSPTQSGTSTAASTTPASTTSTEEATTPTA). Composition is skewed to basic and acidic residues over residues 585 to 594 (SRDEERKESA) and 627 to 648 (EEEK…EKYG). The 47-residue stretch at 677 to 723 (NSNIGNKMLQAMGWKEGSGLGRKSQGITAPIQAQVRMRGAGLGAKGS) folds into the G-patch domain.

This sequence belongs to the RBM5/RBM10 family. As to quaternary structure, component of the spliceosome A complex (also known as the prespliceosome). Appears to dissociate from the spliceosome upon formation of the spliceosome B complex (also known as the precatalytic spliceosome), in which the heterotrimeric U4/U6.U5 snRNPs are bound.

It is found in the nucleus. Its function is as follows. Component of the spliceosome A complex. Regulates alternative splicing of a number of mRNAs. May modulate splice site pairing after recruitment of the U1 and U2 snRNPs to the 5' and 3' splice sites of the intron. The polypeptide is RNA-binding protein 5-B (rbm5-b) (Xenopus laevis (African clawed frog)).